A 413-amino-acid polypeptide reads, in one-letter code: Phosphopentomutase (413 aa).

Residues Asp11, Asp306, His311, Asp347, His348, and His359 each contribute to the Mn(2+) site.

It belongs to the phosphopentomutase family. Mn(2+) serves as cofactor.

Its subcellular location is the cytoplasm. The enzyme catalyses 2-deoxy-alpha-D-ribose 1-phosphate = 2-deoxy-D-ribose 5-phosphate. It carries out the reaction alpha-D-ribose 1-phosphate = D-ribose 5-phosphate. Its pathway is carbohydrate degradation; 2-deoxy-D-ribose 1-phosphate degradation; D-glyceraldehyde 3-phosphate and acetaldehyde from 2-deoxy-alpha-D-ribose 1-phosphate: step 1/2. Functionally, isomerase that catalyzes the conversion of deoxy-ribose 1-phosphate (dRib-1-P) and ribose 1-phosphate (Rib-1-P) to deoxy-ribose 5-phosphate (dRib-5-P) and ribose 5-phosphate (Rib-5-P), respectively. The sequence is that of Phosphopentomutase from Helicobacter pylori (strain ATCC 700392 / 26695) (Campylobacter pylori).